The sequence spans 443 residues: Mitochondrial enolase superfamily member 1 (443 aa).

Substrate is bound by residues 24 to 26 (GAD) and Y34. S148 carries the post-translational modification Phosphoserine. K220 is a substrate binding site. The active-site Proton donor/acceptor is K222. D250 contacts Mg(2+). Residues N252, E276, E305, 355–357 (HAG), and E386 each bind substrate. Mg(2+)-binding residues include E276 and E305. Residue H355 is part of the active site.

It belongs to the mandelate racemase/muconate lactonizing enzyme family. ENOSF1 subfamily. Mg(2+) serves as cofactor. In terms of processing, could be sumoylated.

The protein resides in the mitochondrion. The catalysed reaction is L-fuconate = 2-dehydro-3-deoxy-L-fuconate + H2O. Plays a role in the catabolism of L-fucose, a sugar that is part of the carbohydrates that are attached to cellular glycoproteins. Catalyzes the dehydration of L-fuconate to 2-keto-3-deoxy-L-fuconate by the abstraction of the 2-proton to generate an enediolate intermediate that is stabilized by the magnesium ion. The chain is Mitochondrial enolase superfamily member 1 (ENOSF1) from Homo sapiens (Human).